A 177-amino-acid chain; its full sequence is Inorganic pyrophosphatase (177 aa).

Residues Lys31, Arg45, and Tyr57 each coordinate substrate. Positions 67, 72, and 104 each coordinate Mg(2+). Tyr142 contacts substrate.

The protein belongs to the PPase family. In terms of assembly, homohexamer. It depends on Mg(2+) as a cofactor.

The protein localises to the cytoplasm. It catalyses the reaction diphosphate + H2O = 2 phosphate + H(+). Functionally, catalyzes the hydrolysis of inorganic pyrophosphate (PPi) forming two phosphate ions. The polypeptide is Inorganic pyrophosphatase (Neisseria meningitidis serogroup B (strain ATCC BAA-335 / MC58)).